The primary structure comprises 397 residues: Ribosomal RNA processing protein 1 homolog (397 aa).

The segment covering 334-343 (EAAEAARQEN) has biased composition (basic and acidic residues). The disordered stretch occupies residues 334-366 (EAAEAARQENGDDVPDDEIAEVKKGNGKKTAVP).

Belongs to the RRP1 family.

It is found in the nucleus. Functionally, may be involved in the generation of 28S rRNA. The sequence is that of Ribosomal RNA processing protein 1 homolog from Caenorhabditis elegans.